The sequence spans 337 residues: Aspartate carbamoyltransferase catalytic subunit (337 aa).

Positions 54 and 55 each coordinate carbamoyl phosphate. Lys-82 provides a ligand contact to L-aspartate. Carbamoyl phosphate-binding residues include Arg-104, His-134, and Gln-137. Arg-177 and Arg-232 together coordinate L-aspartate. Carbamoyl phosphate contacts are provided by Gly-277 and Pro-278.

Belongs to the aspartate/ornithine carbamoyltransferase superfamily. ATCase family. Heterododecamer (2C3:3R2) of six catalytic PyrB chains organized as two trimers (C3), and six regulatory PyrI chains organized as three dimers (R2).

It carries out the reaction carbamoyl phosphate + L-aspartate = N-carbamoyl-L-aspartate + phosphate + H(+). Its pathway is pyrimidine metabolism; UMP biosynthesis via de novo pathway; (S)-dihydroorotate from bicarbonate: step 2/3. Catalyzes the condensation of carbamoyl phosphate and aspartate to form carbamoyl aspartate and inorganic phosphate, the committed step in the de novo pyrimidine nucleotide biosynthesis pathway. This Arthrobacter sp. (strain FB24) protein is Aspartate carbamoyltransferase catalytic subunit.